We begin with the raw amino-acid sequence, 683 residues long: Kinesin-like protein KIF2B (683 aa).

Residue T125 is modified to Phosphothreonine; by PLK1. A coiled-coil region spans residues 141 to 176 (LMTQRKSACLREIEKLQKQRERRRRLHREIRAQRAR). S204 carries the post-translational modification Phosphoserine; by PLK1. In terms of domain architecture, Kinesin motor spans 213–543 (RICVCVRKRP…LRYANRVKEI (331 aa)). An ATP-binding site is contributed by 303-310 (GQTGSGKT). A coiled-coil region spans residues 640–672 (QLLSILEKKIDILTEIRRKLKLLQADIQKENRH).

The protein belongs to the TRAFAC class myosin-kinesin ATPase superfamily. Kinesin family. MCAK/KIF2 subfamily. Post-translationally, phosphorylation at Thr-125 by PLK1 is required for activity in the correction of kinetochore-microtubules attachment errors, while phosphorylation at Ser-204 also by PLK1 is required for the kinetochore localization and activity in prometaphase.

It is found in the cytoplasm. The protein resides in the cytoskeleton. Its subcellular location is the microtubule organizing center. It localises to the centrosome. The protein localises to the spindle. It is found in the chromosome. The protein resides in the centromere. Its subcellular location is the kinetochore. Functionally, plus end-directed microtubule-dependent motor required for spindle assembly and chromosome movement during mitosis. Has microtubule depolymerization activity. Plays a role in chromosome congression. The polypeptide is Kinesin-like protein KIF2B (Bos taurus (Bovine)).